The primary structure comprises 128 residues: MTGPFRYNGGSVRSFALTTNFSFPSYDLSFNETEHGVFCYVSRPLTKERSCSHPYISLGSSYGIPDAENIEYPRDARYHSPLLFTVRLLLFSTYWSYSLASQHFKVFTVKESLLLLIISSNFGEPFFS.

This is an uncharacterized protein from Schizosaccharomyces pombe (strain 972 / ATCC 24843) (Fission yeast).